The primary structure comprises 506 residues: U3 small nucleolar RNA-associated protein 18 homolog (506 aa).

The segment covering 1 to 11 (MSSDESSDGLE) has biased composition (acidic residues). Disordered regions lie at residues 1-44 (MSSD…SQAK) and 69-126 (AKSV…PLNH). Positions 24–37 (EQEKPAKIKRERYI) are enriched in basic and acidic residues. Ser102, Ser104, Ser164, and Ser165 each carry phosphoserine. WD repeat units follow at residues 203 to 242 (YAEGNATSIQFHPTSTAALVAGMNGLATIYAVDGQKNERL), 331 to 370 (KQEGKVKGFTWSSDSKRILVCGSTSNVSVLNLRQNLIEHI), 372 to 413 (MDDG…ASKA), and 469 to 505 (EKVGFVTSMAFSPHSSFLAFATKGKQVPLFRLKYFKG).

The protein belongs to the WD repeat UTP18 family. As to quaternary structure, component of U3 snoRNP complex.

It localises to the nucleus. The protein localises to the nucleolus. Its function is as follows. Component of a nucleolar small nuclear ribonucleoprotein particle (snoRNP) thought to participate in the processing and modification of pre-ribosomal RNA. Regulation of cell size by ribosome synthesis is an important parameter for stem cell maintenance and function. This Drosophila melanogaster (Fruit fly) protein is U3 small nucleolar RNA-associated protein 18 homolog (wcd).